A 159-amino-acid chain; its full sequence is Small ribosomal subunit protein uS13 (159 aa).

The tract at residues 136-159 (QRTRSTGRSGATVGVTRKKTQAKK) is disordered. Positions 138-149 (TRSTGRSGATVG) are enriched in low complexity.

The protein belongs to the universal ribosomal protein uS13 family. As to quaternary structure, part of the 30S ribosomal subunit. Forms a loose heterodimer with protein S19. Forms two bridges to the 50S subunit in the 70S ribosome.

In terms of biological role, located at the top of the head of the 30S subunit, it contacts several helices of the 16S rRNA. In the 70S ribosome it contacts the 23S rRNA (bridge B1a) and protein L5 of the 50S subunit (bridge B1b), connecting the 2 subunits; these bridges are implicated in subunit movement. The polypeptide is Small ribosomal subunit protein uS13 (Methanothrix thermoacetophila (strain DSM 6194 / JCM 14653 / NBRC 101360 / PT) (Methanosaeta thermophila)).